The chain runs to 476 residues: Tryptophan--tRNA ligase, cytoplasmic (476 aa).

The tract at residues Met1–Ile117 is dispensable to the catalytic activity. The region spanning Ser13 to Pro69 is the WHEP-TRS domain. The disordered stretch occupies residues Tyr63–Thr83. The residue at position 159 (Lys159) is an N6-succinyllysine. Residues Pro169–His178 carry the 'HIGH' region motif. The 'KMSKS' region motif lies at Lys354 to Ser358. Ser356 is subject to Phosphoserine.

Belongs to the class-I aminoacyl-tRNA synthetase family. In terms of assembly, homodimer. Interacts with oxidized form of GAPDH. Proteolytic cleavage generates 2 forms; T1-TrpRS and T2-TrpRS.

The protein resides in the cytoplasm. The enzyme catalyses tRNA(Trp) + L-tryptophan + ATP = L-tryptophyl-tRNA(Trp) + AMP + diphosphate + H(+). Functionally, T1-TrpRS has aminoacylation activity while T2-TrpRS lacks it. T1-TrpRS and T2-TrpRS possess angiostatic activity. T2-TrpRS inhibits fluid shear stress-activated responses of endothelial cells. Regulates ERK, Akt, and eNOS activation pathways that are associated with angiogenesis, cytoskeletal reorganization and shear stress-responsive gene expression. The protein is Tryptophan--tRNA ligase, cytoplasmic (WARS1) of Bos taurus (Bovine).